The chain runs to 818 residues: Exchange factor for Arf-6 (818 aa).

Disordered regions lie at residues 92–123, 137–168, 208–291, and 326–383; these read AQKLSRLPVPVSTSQIERRGSLARKTSEESSP, MESTDVEESEEETVMMTTDEKENQKKPNENDD, NHHH…GVSN, and RTTP…VGGE. The segment covering 107–119 has biased composition (basic and acidic residues); sequence IERRGSLARKTSE. The segment covering 140 to 149 has biased composition (acidic residues); sequence TDVEESEEET. Residues 154–165 are compositionally biased toward basic and acidic residues; that stretch reads TDEKENQKKPNE. Polar residues-rich tracts occupy residues 213 to 223 and 255 to 269; these read YNSSPQISTLS and MSNNSHQQSFRSPEN. Over residues 326 to 347 the composition is skewed to low complexity; it reads RTTPNTAASNSSASASPSLHAT. Positions 356–532 constitute an SEC7 domain; that stretch reads GVSLRSAESS…KTLFQSIKDN (177 aa). The segment covering 361 to 380 has biased composition (polar residues); sequence SAESSNLNQTAVPSTSTNSV. The PH domain occupies 569 to 681; sequence VEYYSGFLMR…WCEKINFVAA (113 aa). The segment covering 782-799 has biased composition (polar residues); the sequence is TMNIMMTPTRRQQQNQKP. The tract at residues 782 to 818 is disordered; the sequence is TMNIMMTPTRRQQQNQKPVVSEDRLSYTDAVNGAAAH.

As to quaternary structure, interacts (via short N-terminal region) with microtubule-associated proteins tac-1 and zyg-8.

The protein resides in the cytoplasm. It is found in the cell cortex. The protein localises to the cell membrane. Functionally, guanine nucleotide exchange factor for arf-6. Involved in response to injury in mechanosensory neurons. Inhibits axon regrowth via microtubule dynamics, possibly by inducing axonal microtubule catastrophes. Limits microtubule growth near the cellular cortex of early embryonic cells. This Caenorhabditis elegans protein is Exchange factor for Arf-6.